We begin with the raw amino-acid sequence, 436 residues long: Xylose isomerase (436 aa).

Mg(2+) contacts are provided by Asp306 and Asp308.

The protein belongs to the xylose isomerase family. Homotetramer. Mg(2+) serves as cofactor.

Its subcellular location is the cytoplasm. The enzyme catalyses alpha-D-xylose = alpha-D-xylulofuranose. This Sinorhizobium fredii (strain NBRC 101917 / NGR234) protein is Xylose isomerase.